Consider the following 208-residue polypeptide: Sexual inducer glycoprotein (208 aa).

An N-terminal signal peptide occupies residues 1-11 (MAVVVVNSATA). N-linked (GlcNAc...) asparagine glycans are attached at residues Asn89, Asn119, Asn131, Asn139, Asn146, and Asn188.

Its function is as follows. The sexual inducer is a glycoprotein synthesized and released by sexual males at about the time they release sperm packets. It is one of the most potent biological effector molecules known: it exhibits full effectiveness in converting asexually growing males and females to the sexual pathway at about 10(-7) m. This Volvox carteri (Green alga) protein is Sexual inducer glycoprotein.